Reading from the N-terminus, the 255-residue chain is Ribonuclease HII (255 aa).

The RNase H type-2 domain occupies 70–255 (EYIAGVDEVG…FEPVKKILLK (186 aa)). The a divalent metal cation site is built by D76, E77, and D168.

This sequence belongs to the RNase HII family. The cofactor is Mn(2+). Mg(2+) is required as a cofactor.

The protein resides in the cytoplasm. It carries out the reaction Endonucleolytic cleavage to 5'-phosphomonoester.. In terms of biological role, endonuclease that specifically degrades the RNA of RNA-DNA hybrids. This is Ribonuclease HII from Ligilactobacillus salivarius (strain UCC118) (Lactobacillus salivarius).